The following is a 359-amino-acid chain: Heme A synthase (359 aa).

Transmembrane regions (helical) follow at residues 8–28 (IMSI…VVGG), 94–114 (LLGR…YYLK), 124–144 (LLLI…MVKS), 159–179 (GHLL…LIII), and 215–235 (IIIF…GLDA). His274 is a binding site for heme. 3 consecutive transmembrane segments (helical) span residues 276–296 (WFGI…IILN), 303–323 (MGMV…ITLV), and 328–348 (ILAA…FLFI). His334 provides a ligand contact to heme.

This sequence belongs to the COX15/CtaA family. Type 2 subfamily. In terms of assembly, interacts with CtaB. Heme b is required as a cofactor.

It is found in the cell membrane. The catalysed reaction is Fe(II)-heme o + 2 A + H2O = Fe(II)-heme a + 2 AH2. Its pathway is porphyrin-containing compound metabolism; heme A biosynthesis; heme A from heme O: step 1/1. In terms of biological role, catalyzes the conversion of heme O to heme A by two successive hydroxylations of the methyl group at C8. The first hydroxylation forms heme I, the second hydroxylation results in an unstable dihydroxymethyl group, which spontaneously dehydrates, resulting in the formyl group of heme A. This chain is Heme A synthase, found in Orientia tsutsugamushi (strain Ikeda) (Rickettsia tsutsugamushi).